The primary structure comprises 252 residues: Acyltransferase PGAP2 (252 aa).

Topologically, residues 1–22 (MVPVGPERGANSLFSLRFTTFA) are cytoplasmic. The helical transmembrane segment at 23 to 43 (VGTVSLPLFAFLFCIVWSLLF) threads the bilayer. Residues 44–77 (NFSETTATHCHVPNYLPSVSAAIGGETPQRYIWR) lie on the Lumenal side of the membrane. The helical transmembrane segment at 78 to 98 (LCIGLHSAPRFLVGVAYLHYY) threads the bilayer. Topologically, residues 99-111 (QGTPCSSPAYPRL) are cytoplasmic. A helical membrane pass occupies residues 112 to 132 (CHLNFLLNCCEIFFLILLTYV). At 133–142 (SSSENYEVHK) the chain is on the lumenal side. A helical transmembrane segment spans residues 143–163 (LGFMAFMLFSVGYMFVTCSLW). Residues 164–184 (RVARKGSGSLEERTSYAWKKR) lie on the Cytoplasmic side of the membrane. The chain crosses the membrane as a helical span at residues 185-205 (LFGFYLLMFLSSILVYIWHNM). The Lumenal segment spans residues 206-208 (YCE). The chain crosses the membrane as a helical span at residues 209-229 (AGVYTVFALLEYLVVLSNMGF). At 230–252 (HMTAWWDFGNKELMICSPGDKRI) the chain is on the cytoplasmic side.

The protein belongs to the PGAP2 family.

The protein resides in the golgi apparatus membrane. In terms of biological role, involved in the fatty acid remodeling steps of GPI-anchor maturation where the unsaturated acyl chain at sn-2 of inositol phosphate is replaced by a saturated stearoyl chain. May catalyze the second step of the fatty acid remodeling, by reacylating a lyso-GPI intermediate at sn-2 of inositol phosphate by a saturated chain. The fatty acid remodeling steps is critical for the integration of GPI-APs into lipid rafts. This is Acyltransferase PGAP2 from Xenopus tropicalis (Western clawed frog).